The following is a 131-amino-acid chain: MRHRHGLRKLNRTSEHRLAMLRNMANSLIQSEAIKTTVPKAKELRRVVEPLITLAKEPTLANRRLAFDRTRDRDVVAKLFNDLGPRYKARPGGYTRILKMGFRVGDNAPMAFVELVDRPEPAAQAPAEATE.

It belongs to the bacterial ribosomal protein bL17 family. In terms of assembly, part of the 50S ribosomal subunit. Contacts protein L32.

In Methylibium petroleiphilum (strain ATCC BAA-1232 / LMG 22953 / PM1), this protein is Large ribosomal subunit protein bL17.